The following is a 659-amino-acid chain: Nicastrin (659 aa).

The signal sequence occupies residues M1–S22. Topologically, residues S23 to E627 are extracellular. N-linked (GlcNAc...) asparagine glycans are attached at residues N94, N172, N305, N389, N451, N475, N550, N553, and N600. A helical transmembrane segment spans residues I628 to I648. Residues K649–L659 are Cytoplasmic-facing.

It belongs to the nicastrin family. Homodimer. Component of the gamma-secretase complex, a complex composed of a presenilin homodimer, nicastrin, aph1 and pen2.

It localises to the membrane. Essential subunit of the gamma-secretase complex, an endoprotease complex that catalyzes the intramembrane cleavage of integral membrane proteins such as Notch receptors and APP (amyloid-beta precursor protein). It probably represents a stabilizing cofactor required for the assembly of the gamma-secretase complex. This Dictyostelium discoideum (Social amoeba) protein is Nicastrin (ncstn).